The sequence spans 554 residues: Glucose-6-phosphate isomerase (554 aa).

Ser-2 is subject to N-acetylserine. A Phosphothreonine modification is found at Thr-53. D-glucose 6-phosphate-binding positions include 168 to 169 (GS), 218 to 223 (SKTFTT), Gln-363, Glu-367, His-398, and Lys-520. At Thr-220 the chain carries Phosphothreonine. Glu-367 acts as the Proton donor in catalysis. Residues His-398 and Lys-520 contribute to the active site.

Belongs to the GPI family. In terms of assembly, homodimer.

The protein localises to the cytoplasm. It is found in the cytosol. It catalyses the reaction alpha-D-glucose 6-phosphate = beta-D-fructose 6-phosphate. Its pathway is carbohydrate degradation; glycolysis; D-glyceraldehyde 3-phosphate and glycerone phosphate from D-glucose: step 2/4. Strongly inhibited by the polyol (sugar alcohol) phosphate D-glucitol 6-phosphate (D-sorbitol 6-phosphate). Also inhibited by the polyol (sugar alcohol) phosphate D-ribitol 5-phosphate. Functionally, in the cytoplasm, catalyzes the conversion of glucose-6-phosphate to fructose-6-phosphate, the second step in glycolysis, and the reverse reaction during gluconeogenesis. In Saccharomyces cerevisiae (strain ATCC 204508 / S288c) (Baker's yeast), this protein is Glucose-6-phosphate isomerase (PGI1).